The sequence spans 466 residues: Putative D-3-phosphoglycerate dehydrogenase (466 aa).

The span at 1–15 (MDIKGGRRGNVEDSL) shows a compositional bias: basic and acidic residues. The interval 1-26 (MDIKGGRRGNVEDSLNKLSLSPPDNN) is disordered. Residues 16-26 (NKLSLSPPDNN) show a composition bias toward polar residues. Residue serine 87 is modified to Phosphoserine. NAD(+)-binding positions include 205–206 (HI) and aspartate 225. Serine 258 carries the post-translational modification Phosphoserine. NAD(+) contacts are provided by residues 282 to 284 (ASR) and aspartate 308. Arginine 284 is an active-site residue. Glutamate 313 is an active-site residue. Catalysis depends on histidine 344, which acts as the Proton donor. 344–347 (HIGG) contributes to the NAD(+) binding site. Residues 396–466 (RVLFVHRNVP…PCKINTRLLY (71 aa)) enclose the ACT domain.

This sequence belongs to the D-isomer specific 2-hydroxyacid dehydrogenase family.

The catalysed reaction is (2R)-3-phosphoglycerate + NAD(+) = 3-phosphooxypyruvate + NADH + H(+). It carries out the reaction (R)-2-hydroxyglutarate + NAD(+) = 2-oxoglutarate + NADH + H(+). It participates in amino-acid biosynthesis; L-serine biosynthesis; L-serine from 3-phospho-D-glycerate: step 1/3. In terms of biological role, catalyzes the reversible oxidation of 3-phospho-D-glycerate to 3-phosphonooxypyruvate, the first step of the phosphorylated L-serine biosynthesis pathway. Also catalyzes the reversible oxidation of 2-hydroxyglutarate to 2-oxoglutarate. In Schizosaccharomyces pombe (strain 972 / ATCC 24843) (Fission yeast), this protein is Putative D-3-phosphoglycerate dehydrogenase.